A 323-amino-acid chain; its full sequence is Aldo-keto reductase family 1 member C21 (323 aa).

20 to 24 (GFGTA) provides a ligand contact to NADP(+). Substrate is bound at residue Lys31. Asp50 provides a ligand contact to NADP(+). The active-site Proton donor is Tyr55. Residue His117 participates in substrate binding. NADP(+)-binding positions include 166-167 (SN), Gln190, 216-224 (YGVLGTQRY), and 270-280 (TSLKEERIKEN).

Belongs to the aldo/keto reductase family. Monomer. In terms of tissue distribution, detected in kidney and brain.

Its subcellular location is the cytoplasm. The catalysed reaction is androsterone + NADP(+) = 5alpha-androstan-3,17-dione + NADPH + H(+). It carries out the reaction androsterone + NAD(+) = 5alpha-androstan-3,17-dione + NADH + H(+). With respect to regulation, inhibited by high concentrations of substrate. NADP-dependent 17-alpha-hydroxysteroid dehydrogenase that converts 5-alpha-androstane-3,17-dione into androsterone. Has lower 3-alpha-hydroxysteroid dehydrogenase activity. Has broad substrate specificity and acts on various 17-alpha-hydroxysteroids, 17-ketosteroids, 3-alpha hydroxysteroids and 3-ketosteroids. Reduction of keto groups is strictly stereoselective. Reduction of 17-ketosteroids yields only 17-alpha-hydroxysteroids. Likewise, reduction of 3-ketosteroids yields only 3-alpha-hydroxysteroids. The sequence is that of Aldo-keto reductase family 1 member C21 (Akr1c21) from Mus musculus (Mouse).